We begin with the raw amino-acid sequence, 231 residues long: Antiholin-like protein LrgB (231 aa).

A run of 5 helical transmembrane segments spans residues 7–24, 34–56, 91–113, 149–171, and 207–229; these read PYFGIVVSLAAFGIGTFL, FTPLFVAMVLGIAFLKIGGFSYA, WWQIMASIIAGSICSVTIVYLLA, ITAFAVIFNAVIVYALGALFLKV, and ASIAVVVVGVVTVLVIPVFVQLI.

This sequence belongs to the CidB/LrgB family. LrgB subfamily.

The protein resides in the cell membrane. In terms of biological role, inhibits the expression or activity of extracellular murein hydrolases by interacting, possibly with LrgA, with the holin-like protein CidA. The LrgAB and CidA proteins may affect the proton motive force of the membrane. May be involved in programmed cell death (PCD), possibly triggering PCD in response to antibiotics and environmental stresses. In Bacillus subtilis (strain 168), this protein is Antiholin-like protein LrgB.